The following is a 188-amino-acid chain: Large ribosomal subunit protein bL32m (188 aa).

Cys-110, Cys-113, Cys-123, and Cys-126 together coordinate Zn(2+). The interval 164–188 (TPSEQDQGKRIIERDRKRPSWFTQN) is disordered. Residues 169–181 (DQGKRIIERDRKR) are compositionally biased toward basic and acidic residues.

The protein belongs to the bacterial ribosomal protein bL32 family. As to quaternary structure, component of the mitochondrial large ribosomal subunit (mt-LSU). Mature mammalian 55S mitochondrial ribosomes consist of a small (28S) and a large (39S) subunit. The 28S small subunit contains a 12S ribosomal RNA (12S mt-rRNA) and 30 different proteins. The 39S large subunit contains a 16S rRNA (16S mt-rRNA), a copy of mitochondrial valine transfer RNA (mt-tRNA(Val)), which plays an integral structural role, and 52 different proteins. bL32m has a zinc binding site. MRPL32 precursor is processed by the m-AAA protease (composed of AFG3L2 and SPG7), which cleaves the N-terminal transit peptide. Cleavage by the m-AAA protease takes place prior to assembly into the large subunit, an essential step for mitochondrial ribosome (mitoribosome) assembly. Proper processing by the m-AAA protease is dependent on the zinc-binding region within the tightly folded C-terminal domain of MRPL32: zinc-dependent folding halts degradation initiated from the N-terminus and triggers the release of mature MRPL32.

Its subcellular location is the mitochondrion. Functionally, component of the mitochondrial large ribosomal subunit (mt-LSU). The mitochondrial ribosome (mitoribosome) is a large ribonucleoprotein complex responsible for the synthesis of proteins inside mitochondria. In Homo sapiens (Human), this protein is Large ribosomal subunit protein bL32m (MRPL32).